We begin with the raw amino-acid sequence, 194 residues long: Dof zinc finger protein DOF4.2 (194 aa).

A Dof-type zinc finger spans residues 21 to 75 (RVCPRCYSDQTRFSYFNNNKKSQPRYKCKNCCRCWTHGGVLRNIPVTGICDKSNL). Residues Cys23, Cys26, Cys48, and Cys51 each contribute to the Zn(2+) site.

It is found in the nucleus. Its function is as follows. Transcription factor that binds specifically to a 5'-AA[AG]G-3' consensus core sequence. This Arabidopsis thaliana (Mouse-ear cress) protein is Dof zinc finger protein DOF4.2 (DOF4.2).